Consider the following 330-residue polypeptide: Probable aldo-keto reductase 6 (330 aa).

Tyr-64 functions as the Proton donor in the catalytic mechanism. Residue His-132 participates in substrate binding. Residue 211-221 (SPLGRGFLGLP) coordinates NADP(+).

It belongs to the aldo/keto reductase family.

This Arabidopsis thaliana (Mouse-ear cress) protein is Probable aldo-keto reductase 6.